Here is a 405-residue protein sequence, read N- to C-terminus: Tyrosine-protein phosphatase non-receptor type eak-6 (405 aa).

The 280-residue stretch at I30 to Y309 folds into the Tyrosine-protein phosphatase domain. The active-site Phosphocysteine intermediate is C248.

The protein belongs to the protein-tyrosine phosphatase family. In terms of tissue distribution, expressed in the 2 embryonic head hypodermal cells XXXL/R.

It localises to the cytoplasm. The protein localises to the cell membrane. The catalysed reaction is O-phospho-L-tyrosyl-[protein] + H2O = L-tyrosyl-[protein] + phosphate. Putative phosphatase which, together with eak-4 and sdf-9, negatively regulates dauer larva formation downstream of insulin-like receptor daf-2 and in parallel of age-1, pdk-1 and akt-1. The chain is Tyrosine-protein phosphatase non-receptor type eak-6 from Caenorhabditis elegans.